The sequence spans 168 residues: Protein archease (168 aa).

N-acetylalanine is present on alanine 2. Ca(2+) contacts are provided by aspartate 39, aspartate 167, and isoleucine 168.

The protein belongs to the archease family. Component of the tRNA-splicing ligase complex.

Component of the tRNA-splicing ligase complex required to facilitate the enzymatic turnover of catalytic subunit RTCB. Together with DDX1, acts by facilitating the guanylylation of RTCB, a key intermediate step in tRNA ligation. The sequence is that of Protein archease (Zbtb8os) from Mus musculus (Mouse).